The sequence spans 346 residues: Uroporphyrinogen decarboxylase (346 aa).

Residues 23 to 27 (RQAGR), Asp-72, Tyr-149, Thr-204, and His-318 contribute to the substrate site.

This sequence belongs to the uroporphyrinogen decarboxylase family. As to quaternary structure, homodimer.

It localises to the cytoplasm. The catalysed reaction is uroporphyrinogen III + 4 H(+) = coproporphyrinogen III + 4 CO2. The protein operates within porphyrin-containing compound metabolism; protoporphyrin-IX biosynthesis; coproporphyrinogen-III from 5-aminolevulinate: step 4/4. Functionally, catalyzes the decarboxylation of four acetate groups of uroporphyrinogen-III to yield coproporphyrinogen-III. This is Uroporphyrinogen decarboxylase from Synechococcus sp. (strain JA-2-3B'a(2-13)) (Cyanobacteria bacterium Yellowstone B-Prime).